Consider the following 718-residue polypeptide: Ribosomal RNA large subunit methyltransferase K/L (718 aa).

The 112-residue stretch at 44–155 folds into the THUMP domain; it reads DAYKVCIYSH…KQYVNVFLCL (112 aa).

Belongs to the methyltransferase superfamily. RlmKL family.

The protein localises to the cytoplasm. It carries out the reaction guanosine(2445) in 23S rRNA + S-adenosyl-L-methionine = N(2)-methylguanosine(2445) in 23S rRNA + S-adenosyl-L-homocysteine + H(+). The enzyme catalyses guanosine(2069) in 23S rRNA + S-adenosyl-L-methionine = N(2)-methylguanosine(2069) in 23S rRNA + S-adenosyl-L-homocysteine + H(+). In terms of biological role, specifically methylates the guanine in position 2445 (m2G2445) and the guanine in position 2069 (m7G2069) of 23S rRNA. The sequence is that of Ribosomal RNA large subunit methyltransferase K/L from Francisella philomiragia subsp. philomiragia (strain ATCC 25017 / CCUG 19701 / FSC 153 / O#319-036).